The chain runs to 394 residues: RNA-binding motif protein, X-linked-like-2 (394 aa).

One can recognise an RRM domain in the interval 8–86 (GKLFIGGLNL…KAIKVAQATK (79 aa)). Residues 67–78 (RDMNGKSLDGKA) are compositionally biased toward basic and acidic residues. The disordered stretch occupies residues 67–394 (RDMNGKSLDG…MERGGGRSRY (328 aa)). Over residues 150–165 (RGPPPPPRRAGPPPKR) the composition is skewed to pro residues. 2 stretches are compositionally biased toward basic and acidic residues: residues 196–231 (PRREPPPPRRDPYLGPRDEGYSSRDGYSSRDYREPR) and 239–285 (EYTH…REPF). A compositionally biased stretch (low complexity) spans 321–333 (YSGGRDSYSSSYG). Basic and acidic residues-rich tracts occupy residues 334-350 (RSDRYSRGRDRVGRPDR) and 383-394 (GRMERGGGRSRY).

The protein resides in the nucleus. This is RNA-binding motif protein, X-linked-like-2 (RBMXL2) from Macaca fascicularis (Crab-eating macaque).